The chain runs to 461 residues: Putative dipeptidase CPSG_01350 (461 aa).

The span at 1 to 10 shows a compositional bias: basic and acidic residues; that stretch reads MSARDNEKGS. The interval 1 to 31 is disordered; that stretch reads MSARDNEKGSARSQPSHAAASEIENVPRPSR. The helical transmembrane segment at 35 to 52 threads the bilayer; sequence WTGTMIKVFIICACAGIV. 3 residues coordinate Zn(2+): His90, Asp92, and Glu203. Cys142 and Cys232 are disulfide-bonded. His230 contacts substrate. Positions 274 and 295 each coordinate Zn(2+). Substrate is bound by residues Arg306 and Asp366. Residue Asn379 is glycosylated (N-linked (GlcNAc...) asparagine).

Belongs to the metallo-dependent hydrolases superfamily. Peptidase M19 family. Zn(2+) serves as cofactor.

The protein localises to the membrane. It carries out the reaction an L-aminoacyl-L-amino acid + H2O = 2 an L-alpha-amino acid. Hydrolyzes a wide range of dipeptides. This is Putative dipeptidase CPSG_01350 from Coccidioides posadasii (strain RMSCC 757 / Silveira) (Valley fever fungus).